The primary structure comprises 285 residues: Chemotaxis protein LafT (285 aa).

4 helical membrane-spanning segments follow: residues 4–23 (FLGV…WAGG), 34–51 (FLII…GNPP), 171–191 (ALPG…MQAI), and 201–222 (HVAA…GLDP). The Cytoplasmic portion of the chain corresponds to 223–285 (LSNAMAQRVK…MEKWLAEQEG (63 aa)).

Belongs to the MotA family.

Its subcellular location is the cell inner membrane. Its function is as follows. Required for rotation of the flagellar motor. Probable transmembrane proton channel. This Vibrio parahaemolyticus serotype O3:K6 (strain RIMD 2210633) protein is Chemotaxis protein LafT (lafT).